We begin with the raw amino-acid sequence, 284 residues long: MGPGKEKFALITGCGDGGIGHALANNFVQNGFIVIATLLPHESRTHLEHAKIHVIDLDVTKEDQMIPFRSTLEEITGGTLDVLVNNAGICYTMTAADTDVKQVEKMFAVNVFGPMRLVHHLHRMLIAAPRGVIVNIGSIGGVCPYVFGASYNATKAALHHWGNTLRVEMKPFGVHVVNIISGEVATNILKSDVRDNRTLPEDSVYAPLAQLFKDHVNRTPDAMSPDDYARGVVAMVQRRSLPAWFWHGNATGFIWTLDSFFPRTIWDWLFTRWFKLENLVGTQG.

NADP(+) is bound by residues isoleucine 11, threonine 37, aspartate 58, asparagine 86, tyrosine 151, lysine 155, valine 184, and threonine 186. The Proton acceptor role is filled by tyrosine 151. The active-site Lowers pKa of active site Tyr is the lysine 155.

The protein belongs to the short-chain dehydrogenases/reductases (SDR) family.

The protein operates within polyketide biosynthesis. Its function is as follows. Short-chain dehydrogenase; part of the gene cluster that mediates the biosynthesis of pyriculol and pyriculariol, two heptaketides that induce lesion formation upon application on rice leaves but are dispensable for pathogenicity. The highly reducing polyketide synthase synthesizes the heptaketide backbone of pyriculol and pyriculariol. Pyriculol and pyriculariol contain several hydroxyl moieties and double bonds, so it can be assumed that several reduction steps occur during biosynthesis. These reactions could be executed by PKS19 itself or partly by the tailoring enzymes OXR1, OXR2, RED1, RED2 or RED3, identified within the cluster. The FAD-linked oxidoreductase OXR1 is the only tailoring enzyme for which the function has been determined yet, and is involved in the oxidation of dihydropyriculol and dihydropyriculariol into pyriculol and pyriculariol, respectively. The polypeptide is Short-chain dehydrogenase RED1 (Pyricularia oryzae (strain 70-15 / ATCC MYA-4617 / FGSC 8958) (Rice blast fungus)).